Here is a 1481-residue protein sequence, read N- to C-terminus: Cystic fibrosis transmembrane conductance regulator (1481 aa).

At 1–77 (MQKSPLEKAG…KLINALRRCF (77 aa)) the chain is on the cytoplasmic side. Residues 78–98 (FWRFMFYGILLYLGEVTKAVQ) form a helical membrane-spanning segment. The ABC transmembrane type-1 1 domain maps to 81–365 (FMFYGILLYL…WAVQTWYDSL (285 aa)). At 99–122 (PLLLGRIIASYDPDNKVERSIAIY) the chain is on the extracellular side. Residues 123 to 146 (LGIGLCLLFVVRTLLLHPAIFGLH) traverse the membrane as a helical segment. Residues 147–195 (HIGMQMRIAMFSLIYKKTLKLSSRVLDKISIGQLISLLSNNLNKFDEGL) are Cytoplasmic-facing. Residues 196–216 (ALAHFVWISPLQVTLLMGLLW) form a helical membrane-spanning segment. Over 217 to 222 (ELLQAS) the chain is Extracellular. The helical transmembrane segment at 223 to 243 (AFCGLAFLIVLALVQAGLGRM) threads the bilayer. At 244–298 (MMKYRDQRAGKINERLVITSEMIENIQSVKAYCWEEAMEKMIENLRQTELKLTRK) the chain is on the cytoplasmic side. The chain crosses the membrane as a helical span at residues 299-319 (AAYVRYFNSSAFFFSGFFVVF). Topologically, residues 320-339 (LSVLPYALTKGIILRKIFTT) are extracellular. The chain crosses the membrane as a helical span at residues 340–358 (ISFCIVLRMAVTRQFPWAV). The Cytoplasmic portion of the chain corresponds to 359-858 (QTWYDSLGAI…YLRYITVHRS (500 aa)). Residues Trp-401, Ser-434, 458-465 (GSTGAGKT), and Gln-493 contribute to the ATP site. The 224-residue stretch at 423–646 (NGDNNLFFSN…RPDFSSKLMG (224 aa)) folds into the ABC transporter 1 domain. Residue Cys-524 is the site of S-palmitoyl cysteine attachment. Phosphoserine occurs at positions 549 and 660. The segment at 654–831 (SAERRNSILT…EEINEEDLKE (178 aa)) is disordered R region. Ser-670 carries the post-translational modification Phosphoserine; by PKA. Ser-686 carries the post-translational modification Phosphoserine. Lys-688 participates in a covalent cross-link: Glycyl lysine isopeptide (Lys-Gly) (interchain with G-Cter in ubiquitin). A phosphoserine mark is found at Ser-700 and Ser-712. Thr-717 bears the Phosphothreonine mark. Residues Ser-737, Ser-768, Ser-790, Ser-795, and Ser-813 each carry the phosphoserine modification. Residues 859–879 (LIFVLIWCIVIFLAEVAASLV) traverse the membrane as a helical segment. In terms of domain architecture, ABC transmembrane type-1 2 spans 859-1155 (LIFVLIWCIV…AVNSSIDVDS (297 aa)). Residues 880 to 918 (VLWLFGNTAPQDKENSTKSGNSSYAVIITNTSSYYFFYI) are Extracellular-facing. N-linked (GlcNAc...) asparagine glycans are attached at residues Asn-894, Asn-900, and Asn-909. A discontinuously helical membrane pass occupies residues 919 to 939 (YVGVADTLLALGLFRGLPLVH). Topologically, residues 940 to 990 (TLITVSKILHHKMLHSVLQAPMSTLNTLKAGGILNRFSKDIAILDDLLPLT) are cytoplasmic. A helical transmembrane segment spans residues 991–1011 (IFDFIQLLLIVVGAIAVVSVL). At 1012-1013 (QP) the chain is on the extracellular side. A helical transmembrane segment spans residues 1014 to 1034 (YIFLATVPVIAAFILLRAYFL). Over 1035 to 1095 (HTSQQLKQLE…TANWFLYLST (61 aa)) the chain is Cytoplasmic. Residues 1096–1116 (LRWFQMRIEMIFVLFFIAVAF) traverse the membrane as a helical segment. Over 1117-1130 (ISILTTGEGEGRVG) the chain is Extracellular. Residues 1131 to 1151 (IILTLAMNIMSTLQWAVNSSI) form a helical membrane-spanning segment. Topologically, residues 1152–1481 (DVDSLMRSVS…AEEEVQGTRL (330 aa)) are cytoplasmic. The 246-residue stretch at 1199–1444 (VKKDDVWPSG…KSLFRQAISS (246 aa)) folds into the ABC transporter 2 domain. ATP-binding positions include Tyr-1220 and 1245–1252 (GRTGSGKS). The tract at residues 1387–1481 (RTLKQAFADC…AEEEVQGTRL (95 aa)) is interaction with GORASP2. Cys-1396 carries the S-palmitoyl cysteine lipid modification. Phosphoserine occurs at positions 1445 and 1457. The segment at 1449–1481 (KLFPHRNSSKHKSRPQITALKEEAEEEVQGTRL) is disordered. Basic residues predominate over residues 1450–1462 (LFPHRNSSKHKSR). Residues 1471–1481 (EAEEEVQGTRL) are compositionally biased toward acidic residues. Positions 1479 to 1481 (TRL) match the PDZ-binding motif.

It belongs to the ABC transporter superfamily. ABCC family. CFTR transporter (TC 3.A.1.202) subfamily. Monomer; does not require oligomerization for channel activity. May form oligomers in the membrane. Interacts with SLC26A3, SLC26A6 and NHERF1. Interacts with SHANK2. Interacts with MYO6. Interacts (via C-terminus) with GOPC (via PDZ domain); this promotes CFTR internalization and thereby decreases channel activity. Interacts with SLC4A7 through NHERF1. Found in a complex with MYO5B and RAB11A. Interacts with ANO1. Interacts with SLC26A8. Interacts with AHCYL1; the interaction increases CFTR activity. Interacts with CSE1L. The core-glycosylated form interacts with GORASP2 (via PDZ GRASP-type 1 domain) in respone to ER stress. Interacts with MARCHF2; the interaction leads to CFTR ubiqtuitination and degradation. Interacts with ADGRG2. N-glycosylated. Post-translationally, phosphorylated; cAMP treatment promotes phosphorylation and activates the channel. Dephosphorylation decreases the ATPase activity (in vitro). Phosphorylation at PKA sites activates the channel. Phosphorylation at PKC sites enhances the response to phosphorylation by PKA. Phosphorylated by AMPK; this inhibits channel activity. In terms of processing, ubiquitinated, leading to its degradation in the lysosome. Deubiquitination by USP10 in early endosomes enhances its endocytic recycling to the cell membrane. Ubiquitinated by RNF185 during ER stress. Ubiquitinated by MARCHF2. In terms of tissue distribution, isoform 1 is expressed in the pancreas. Isoform 2 is specifically expressed in the ventricle.

It is found in the apical cell membrane. It localises to the early endosome membrane. The protein resides in the cell membrane. The protein localises to the recycling endosome membrane. Its subcellular location is the endoplasmic reticulum membrane. It is found in the nucleus. It catalyses the reaction ATP + H2O + closed Cl(-) channel = ADP + phosphate + open Cl(-) channel.. The enzyme catalyses chloride(in) = chloride(out). The catalysed reaction is hydrogencarbonate(in) = hydrogencarbonate(out). It carries out the reaction ATP + H2O = ADP + phosphate + H(+). Its function is as follows. Epithelial ion channel that plays an important role in the regulation of epithelial ion and water transport and fluid homeostasis. Mediates the transport of chloride ions across the cell membrane. Possesses an intrinsic ATPase activity and utilizes ATP to gate its channel; the passive flow of anions through the channel is gated by cycles of ATP binding and hydrolysis by the ATP-binding domains. The ion channel is also permeable to HCO(3)(-); selectivity depends on the extracellular chloride concentration. Exerts its function also by modulating the activity of other ion channels and transporters. Contributes to the regulation of the pH and the ion content of the epithelial fluid layer. Modulates the activity of the epithelial sodium channel (ENaC) complex, in part by regulating the cell surface expression of the ENaC complex. May regulate bicarbonate secretion and salvage in epithelial cells by regulating the transporter SLC4A7. Can inhibit the chloride channel activity of ANO1. Plays a role in the chloride and bicarbonate homeostasis during sperm epididymal maturation and capacitation. This Oryctolagus cuniculus (Rabbit) protein is Cystic fibrosis transmembrane conductance regulator.